The primary structure comprises 348 residues: MGRNIKIIKKNLAFLNDFSPGILACLIISVLAYGLEILEKQLFGQAWLESLVLAILLGSITGSCFTLPKYFQKGITFCAKTLLEIAIVLLGASISVNAVLSAGWNLLASIIFVIFVTLILSFTIGRLFGLSSHLAMLVACGNAICGNSAIVAVAPVIKAKHEEVASSIAFTALLGVLIILFLPFLHPFLNLSFSQYGVLSGMVVYAVPQVLAATASVSFVSVQIATVVKLVRVLMLGPLIFALSILYHRSAQTRLRLHTLVPWFIIGFIFMMLIRSSNLIPEKTLIPIRFIAQLFTVISMAALGLGVDIRSLKKAGWRVILASTCSILILGVCSLIMIQLNDLNPIMF.

The next 11 membrane-spanning stretches (helical) occupy residues 13 to 35 (AFLNDFSPGILACLIISVLAYGL), 45 to 67 (QAWLESLVLAILLGSITGSCFTL), 74 to 96 (GITFCAKTLLEIAIVLLGASISV), 106 to 128 (LLASIIFVIFVTLILSFTIGRLF), 135 to 157 (AMLVACGNAICGNSAIVAVAPVI), 167 to 189 (SIAFTALLGVLIILFLPFLHPFL), 196 to 218 (YGVLSGMVVYAVPQVLAATASVS), 223 to 245 (QIATVVKLVRVLMLGPLIFALSI), 257 to 275 (LHTLVPWFIIGFIFMMLIR), 285 to 307 (LIPIRFIAQLFTVISMAALGLGV), and 319 to 341 (VILASTCSILILGVCSLIMIQLN).

This sequence belongs to the UPF0324 family.

Its subcellular location is the cell membrane. This chain is UPF0324 membrane protein BH02290, found in Bartonella henselae (strain ATCC 49882 / DSM 28221 / CCUG 30454 / Houston 1) (Rochalimaea henselae).